The chain runs to 153 residues: Arachidonate 5-lipoxygenase-activating protein (153 aa).

The Lumenal segment spans residues 1–8 (MDQEAVGN). The helical transmembrane segment at 9–30 (VVLLAIVTLISVVQNGFFAHKV) threads the bilayer. The Cytoplasmic segment spans residues 31-52 (EHESRNQNGRSFQRTGTLAFER). The chain crosses the membrane as a helical span at residues 53-77 (VYTANQNCVDAYPTFLAVLWTAGLL). Over 78–80 (CSQ) the chain is Lumenal. The helical transmembrane segment at 81-102 (VPAAFAGLMYLFVRQKYFVGYL) threads the bilayer. The Cytoplasmic segment spans residues 103–107 (GERTQ). An intramembrane segment occupies 108–115 (STPGYIFG). A helical membrane pass occupies residues 116–128 (KRIILFLFLMSLA). The Lumenal portion of the chain corresponds to 129 to 153 (GILNYCLILLFGSDFENYIKTISTT).

The protein belongs to the MAPEG family. Homotrimer. Interacts with LTC4S and ALOX5.

Its subcellular location is the nucleus membrane. The protein resides in the endoplasmic reticulum membrane. Functionally, required for leukotriene biosynthesis by ALOX5 (5-lipoxygenase). Anchors ALOX5 to the membrane. Binds arachidonic acid, and could play an essential role in the transfer of arachidonic acid to ALOX5. Binds to MK-886, a compound that blocks the biosynthesis of leukotrienes. The chain is Arachidonate 5-lipoxygenase-activating protein (ALOX5AP) from Oryctolagus cuniculus (Rabbit).